The chain runs to 123 residues: Large ribosomal subunit protein bL12 (123 aa).

This sequence belongs to the bacterial ribosomal protein bL12 family. As to quaternary structure, homodimer. Part of the ribosomal stalk of the 50S ribosomal subunit. Forms a multimeric L10(L12)X complex, where L10 forms an elongated spine to which 2 to 4 L12 dimers bind in a sequential fashion. Binds GTP-bound translation factors.

Forms part of the ribosomal stalk which helps the ribosome interact with GTP-bound translation factors. Is thus essential for accurate translation. In Borrelia turicatae (strain 91E135), this protein is Large ribosomal subunit protein bL12.